The sequence spans 309 residues: Short-chain dehydrogenase/reductase ARMGADRAFT_1018437 (309 aa).

Positions 64, 86, and 113 each coordinate NADP(+). The active-site Proton donor is serine 167. Residues tyrosine 196 and lysine 200 each coordinate NADP(+). Tyrosine 196 (proton acceptor) is an active-site residue. Catalysis depends on lysine 200, which acts as the Lowers pKa of active site Tyr.

The protein belongs to the short-chain dehydrogenases/reductases (SDR) family.

The protein operates within secondary metabolite biosynthesis. Functionally, short-chain dehydrogenase/reductase, part of the gene cluster that mediates the biosynthesis of melleolides, a range of antifungal and phytotoxic polyketide derivatives composed of an orsellinic acid (OA) moiety esterified to various sesquiterpene alcohols. The first step in melleolides biosynthesis is performed by the delta(6)-protoilludene synthase PRO1 which catalyzes the cyclization of farnesyl diphosphate to protoilludene. The orsellinic acid synthase armB produces OA by condensing acetyl-CoA with 3 malonyl-CoA units in a three-round chain elongation reaction folowed by a C2-C7 ring closure. ArmB further catalyzes the trans-esterification of OA to the various sesquiterpene alcohols resulting from the hydroxylation of protoilludene. The melleolides cluster also includes 5 cytochrome P450 monooxygenases, 4 NAD(+)-dependent oxidoreductases, one flavin-dependent oxidoreductase, and one O-methyltransferase. The cytochrome P450 monooxygenases may be involved in protoilludene hydroxylation to elaborate melleolides with multiple alcohol groups, such as melleolide D, which carries alcohol functionalities at C-4, C-5, C-10, and C-13. The role of the NAD(+)-dependent enzymes remains unknown. Numerous melleolides, including arnamial, show 5'-O-methylation of the aromatic moiety which may be catalyzed by the methyltransferase encoded in the cluster. The flavin-dependent oxidoreductase might represent the dehydrogenase yielding the aldehyde in position 1 of arnamial and other melleolides. Finally, several halogenase localized outside of the cluster, are able to catalyze the transfer of a single chlorine atom to the melleolide backbone, resulting in a 6'-chloromelleolide product. The protein is Short-chain dehydrogenase/reductase ARMGADRAFT_1018437 of Armillaria gallica (Bulbous honey fungus).